The primary structure comprises 375 residues: Aminomethyltransferase (375 aa).

Belongs to the GcvT family. The glycine cleavage system is composed of four proteins: P, T, L and H.

The enzyme catalyses N(6)-[(R)-S(8)-aminomethyldihydrolipoyl]-L-lysyl-[protein] + (6S)-5,6,7,8-tetrahydrofolate = N(6)-[(R)-dihydrolipoyl]-L-lysyl-[protein] + (6R)-5,10-methylene-5,6,7,8-tetrahydrofolate + NH4(+). In terms of biological role, the glycine cleavage system catalyzes the degradation of glycine. The chain is Aminomethyltransferase from Ralstonia pickettii (strain 12J).